The sequence spans 331 residues: DNA-directed RNA polymerase subunit alpha (331 aa).

Residues 1–225 form an alpha N-terminal domain (alpha-NTD) region; that stretch reads MLDIAMPKLE…QYSSIIADFN (225 aa). Residues 243–331 form an alpha C-terminal domain (alpha-CTD) region; it reads PSEIYDMPIE…AARLNDGSAE (89 aa).

It belongs to the RNA polymerase alpha chain family. In terms of assembly, homodimer. The RNAP catalytic core consists of 2 alpha, 1 beta, 1 beta' and 1 omega subunit. When a sigma factor is associated with the core the holoenzyme is formed, which can initiate transcription.

The enzyme catalyses RNA(n) + a ribonucleoside 5'-triphosphate = RNA(n+1) + diphosphate. DNA-dependent RNA polymerase catalyzes the transcription of DNA into RNA using the four ribonucleoside triphosphates as substrates. The protein is DNA-directed RNA polymerase subunit alpha of Herpetosiphon aurantiacus (strain ATCC 23779 / DSM 785 / 114-95).